The sequence spans 93 residues: Stromal cell-derived factor 1 (93 aa).

The N-terminal stretch at Met1–Gly21 is a signal peptide. The short motif at Lys22–Pro23 is the Receptor activation motif element. The tract at residues Arg29–Arg33 is receptor and heparin binding. 2 cysteine pairs are disulfide-bonded: Cys30-Cys55 and Cys32-Cys71. 3 receptor binding regions span residues Val39–Arg41, Lys48–Leu50, and Val60–Val70. Heparin contacts are provided by residues Arg41–Asn51, Arg62, Gln69, and Lys85.

The protein belongs to the intercrine alpha (chemokine CxC) family. In terms of assembly, monomer or homodimer; in equilibrium. Dimer formation is induced by non acidic pH and the presence of multivalent anions, and by binding to CXCR4 or heparin. Monomeric form is required for full chemotactic activity and resistance to ischemia/reperfusion injury, whereas the dimeric form acts as a partial agonist of CXCR4, stimulating Ca2+ mobilization but with no chemotactic activity and instead acts as a selective antagonist that blocks chemotaxis induced by the monomeric form. Interacts with the N-terminus of ACKR3. Interacts with integrin subunit ITGB3 (via the allosteric site (site 2)). Interacts with TNFAIP6 (via Link domain).

The protein localises to the secreted. Its function is as follows. Chemoattractant active on T-lymphocytes and monocytes but not neutrophils. Activates the C-X-C chemokine receptor CXCR4 to induce a rapid and transient rise in the level of intracellular calcium ions and chemotaxis. Also binds to atypical chemokine receptor ACKR3, which activates the beta-arrestin pathway and acts as a scavenger receptor for SDF-1. Acts as a positive regulator of monocyte migration and a negative regulator of monocyte adhesion via the LYN kinase. Binds to the allosteric site (site 2) of integrins and activates integrins ITGAV:ITGB3, ITGA4:ITGB1 and ITGA5:ITGB1 in a CXCR4-independent manner. Stimulates migration of monocytes and T-lymphocytes through its receptors, CXCR4 and ACKR3, and decreases monocyte adherence to surfaces coated with ICAM-1, a ligand for beta-2 integrins. SDF1A/CXCR4 signaling axis inhibits beta-2 integrin LFA-1 mediated adhesion of monocytes to ICAM-1 through LYN kinase. Plays a protective role after myocardial infarction. Has several critical functions during embryonic development; required for B-cell lymphopoiesis, myelopoiesis in bone marrow and heart ventricular septum formation. Stimulates the proliferation of bone marrow-derived B-cell progenitors in the presence of IL7 as well as growth of stromal cell-dependent pre-B-cells. This Felis catus (Cat) protein is Stromal cell-derived factor 1 (CXCL12).